Consider the following 551-residue polypeptide: Probable malate:quinone oxidoreductase (551 aa).

A compositionally biased stretch (low complexity) spans glutamine 525–lysine 544. The tract at residues glutamine 525–leucine 551 is disordered.

Belongs to the MQO family. Requires FAD as cofactor.

It carries out the reaction (S)-malate + a quinone = a quinol + oxaloacetate. Its pathway is carbohydrate metabolism; tricarboxylic acid cycle; oxaloacetate from (S)-malate (quinone route): step 1/1. The chain is Probable malate:quinone oxidoreductase from Enterobacter sp. (strain 638).